The sequence spans 378 residues: Succinyl-diaminopimelate desuccinylase (378 aa).

A Zn(2+)-binding site is contributed by His67. Residue Asp69 is part of the active site. Asp100 provides a ligand contact to Zn(2+). Glu134 (proton acceptor) is an active-site residue. The Zn(2+) site is built by Glu135, Glu163, and His349.

It belongs to the peptidase M20A family. DapE subfamily. Homodimer. Zn(2+) is required as a cofactor. Requires Co(2+) as cofactor.

It catalyses the reaction N-succinyl-(2S,6S)-2,6-diaminopimelate + H2O = (2S,6S)-2,6-diaminopimelate + succinate. It functions in the pathway amino-acid biosynthesis; L-lysine biosynthesis via DAP pathway; LL-2,6-diaminopimelate from (S)-tetrahydrodipicolinate (succinylase route): step 3/3. Catalyzes the hydrolysis of N-succinyl-L,L-diaminopimelic acid (SDAP), forming succinate and LL-2,6-diaminopimelate (DAP), an intermediate involved in the bacterial biosynthesis of lysine and meso-diaminopimelic acid, an essential component of bacterial cell walls. The protein is Succinyl-diaminopimelate desuccinylase of Nitrosospira multiformis (strain ATCC 25196 / NCIMB 11849 / C 71).